Reading from the N-terminus, the 199-residue chain is Putative pseudouridine methyltransferase (199 aa).

2 residues coordinate S-adenosyl-L-methionine: Leu132 and Cys186.

It belongs to the methyltransferase superfamily. TrmY family.

The protein localises to the cytoplasm. The polypeptide is Putative pseudouridine methyltransferase (Vibrio campbellii (strain ATCC BAA-1116)).